The primary structure comprises 375 residues: tRNA/tmRNA (uracil-C(5))-methyltransferase (375 aa).

S-adenosyl-L-methionine contacts are provided by Gln-197, Tyr-225, Asn-230, Glu-246, and Asp-306. Catalysis depends on Cys-331, which acts as the Nucleophile. The active-site Proton acceptor is Glu-365.

The protein belongs to the class I-like SAM-binding methyltransferase superfamily. RNA M5U methyltransferase family. TrmA subfamily.

The catalysed reaction is uridine(54) in tRNA + S-adenosyl-L-methionine = 5-methyluridine(54) in tRNA + S-adenosyl-L-homocysteine + H(+). It carries out the reaction uridine(341) in tmRNA + S-adenosyl-L-methionine = 5-methyluridine(341) in tmRNA + S-adenosyl-L-homocysteine + H(+). Its function is as follows. Dual-specificity methyltransferase that catalyzes the formation of 5-methyluridine at position 54 (m5U54) in all tRNAs, and that of position 341 (m5U341) in tmRNA (transfer-mRNA). The polypeptide is tRNA/tmRNA (uracil-C(5))-methyltransferase (Aliarcobacter butzleri (strain RM4018) (Arcobacter butzleri)).